The following is an 817-amino-acid chain: Fibroblast growth factor receptor 2 (817 aa).

The N-terminal stretch at Met1–Ala22 is a signal peptide. Residues Arg23–Glu377 lie on the Extracellular side of the membrane. Ig-like C2-type domains are found at residues Leu26–Thr126, Pro159–Asp247, and Pro256–Thr358. Asn32, Asn84, and Asn124 each carry an N-linked (GlcNAc...) asparagine glycan. The cysteines at positions 63 and 108 are disulfide-linked. A heparin-binding region spans residues Lys161–Arg178. Cys179 and Cys231 are oxidised to a cystine. 5 N-linked (GlcNAc...) asparagine glycosylation sites follow: Asn228, Asn265, Asn297, Asn318, and Asn331. Cys278 and Cys342 are disulfide-bonded. Residues Ile378–Cys398 traverse the membrane as a helical segment. Residues Arg399–Thr817 lie on the Cytoplasmic side of the membrane. The interval Thr429–Pro465 is disordered. Over residues Ser431–Ser441 the composition is skewed to low complexity. Tyr462 is modified (phosphotyrosine; by autocatalysis). The 290-residue stretch at Leu477–Leu766 folds into the Protein kinase domain. ATP contacts are provided by residues Leu483–Val491, Lys513, Glu561–Ala563, and Asn567. Position 582 is a phosphotyrosine; by autocatalysis (Tyr582). Catalysis depends on Asp622, which acts as the Proton acceptor. Tyr652, Tyr653, and Tyr765 each carry phosphotyrosine; by autocatalysis.

This sequence belongs to the protein kinase superfamily. Tyr protein kinase family. Fibroblast growth factor receptor subfamily. Monomer. Homodimer after ligand binding. In terms of processing, autophosphorylated. Binding of FGF family members together with heparan sulfate proteoglycan or heparin promotes receptor dimerization and autophosphorylation on tyrosine residues. Autophosphorylation occurs in trans between the two FGFR molecules present in the dimer. Post-translationally, N-glycosylated in the endoplasmic reticulum. The N-glycan chains undergo further maturation to an Endo H-resistant form in the Golgi apparatus. Ubiquitinated. FGFR2 is rapidly ubiquitinated after autophosphorylation, leading to internalization and degradation. Subject to degradation both in lysosomes and by the proteasome.

It localises to the cell membrane. Its subcellular location is the golgi apparatus. It is found in the cytoplasmic vesicle. It carries out the reaction L-tyrosyl-[protein] + ATP = O-phospho-L-tyrosyl-[protein] + ADP + H(+). Its activity is regulated as follows. Present in an inactive conformation in the absence of bound ligand. Ligand binding leads to dimerization and activation by autophosphorylation on tyrosine residues. Its function is as follows. Tyrosine-protein kinase that acts as a cell-surface receptor for fibroblast growth factors and plays an essential role in the regulation of cell proliferation, differentiation, migration and apoptosis, and in the regulation of embryonic development. Required for normal embryonic patterning, limb bud development, lung morphogenesis, osteogenesis and skin development. Plays an essential role in the regulation of osteoblast differentiation, proliferation and apoptosis, and is required for normal skeleton development. Promotes cell proliferation in keratinocytes and immature osteoblasts, but promotes apoptosis in differentiated osteoblasts. Phosphorylates PLCG1, FRS2 and PAK4. Ligand binding leads to the activation of several signaling cascades. Activation of PLCG1 leads to the production of the cellular signaling molecules diacylglycerol and inositol 1,4,5-trisphosphate. Phosphorylation of FRS2 triggers recruitment of GRB2, GAB1, PIK3R1 and SOS1, and mediates activation of RAS, MAPK1/ERK2, MAPK3/ERK1 and the MAP kinase signaling pathway, as well as of the AKT1 signaling pathway. FGFR2 signaling is down-regulated by ubiquitination, internalization and degradation. Mutations that lead to constitutive kinase activation or impair normal FGFR2 maturation, internalization and degradation lead to aberrant signaling. Over-expressed FGFR2 promotes activation of STAT1. This Danio rerio (Zebrafish) protein is Fibroblast growth factor receptor 2 (fgfr2).